The chain runs to 271 residues: tRNA (guanine-N(7)-)-methyltransferase (271 aa).

Glutamate 95, glutamate 120, aspartate 147, and aspartate 175 together coordinate S-adenosyl-L-methionine. Aspartate 175 is a catalytic residue. Residues lysine 179, aspartate 211, and 249 to 252 (THFE) contribute to the substrate site.

This sequence belongs to the class I-like SAM-binding methyltransferase superfamily. TrmB family.

It carries out the reaction guanosine(46) in tRNA + S-adenosyl-L-methionine = N(7)-methylguanosine(46) in tRNA + S-adenosyl-L-homocysteine. It participates in tRNA modification; N(7)-methylguanine-tRNA biosynthesis. Functionally, catalyzes the formation of N(7)-methylguanine at position 46 (m7G46) in tRNA. The polypeptide is tRNA (guanine-N(7)-)-methyltransferase (Rhodopirellula baltica (strain DSM 10527 / NCIMB 13988 / SH1)).